Reading from the N-terminus, the 1100-residue chain is Sorbin and SH3 domain-containing protein 2 (1100 aa).

6 positions are modified to phosphoserine: tyrosine 13, serine 14, histidine 27, glycine 28, serine 30, and serine 43. Positions 30–52 are enriched in polar residues; that stretch reads SLDSTDTYPQHAQSLDGTTSSSI. The interval 30 to 57 is disordered; sequence SLDSTDTYPQHAQSLDGTTSSSIPLYRS. One can recognise a SoHo domain in the interval 66–127; it reads VIKAPHYPGI…YNTPYTYNAG (62 aa). Positions 134 to 147 are enriched in polar residues; sequence SAQSHPAAKTQTYR. The tract at residues 134-311 is disordered; sequence SAQSHPAAKT…SPSRAKGGDD (178 aa). Residue histidine 153 is modified to Alanine amide. 2 positions are modified to phosphoserine: serine 154 and serine 157. A compositionally biased stretch (pro residues) spans 167–180; the sequence is PVPPPHVPPPVPPL. A compositionally biased stretch (basic and acidic residues) spans 181-217; sequence RPRDRSSTEKHDWDPPDRKVDTRKFRSEPRSIFEYEP. A phosphothreonine mark is found at serine 234 and isoleucine 236. 6 positions are modified to phosphoserine: serine 239, serine 245, serine 248, lysine 258, serine 259, and glutamate 260. 3 positions are modified to phosphothreonine: threonine 277, glycine 280, and valine 282. A Phosphoserine modification is found at serine 287. Positions 287 to 304 are enriched in low complexity; sequence SSTTLTKSFTSSSPSSPS. Threonine 292 is subject to Phosphothreonine. A phosphoserine mark is found at phenylalanine 295, serine 297, serine 298, serine 299, serine 301, serine 302, serine 304, alanine 306, aspartate 311, and proline 316. 3 positions are modified to phosphothreonine: serine 320, serine 322, and glycine 326. Histidine 341, valine 344, and arginine 346 each carry phosphoserine. Glutamate 366 carries the phosphothreonine modification. 2 positions are modified to phosphoserine: serine 381 and serine 383. Aspartate 413 and lysine 415 each carry phosphothreonine. 2 positions are modified to phosphoserine: arginine 437 and arginine 439. Isoleucine 459 is subject to Phosphothreonine. 5 positions are modified to phosphoserine: lysine 474, serine 494, serine 497, serine 550, and serine 750. A disordered region spans residues 807–866; it reads RMPRSASFQDVDTANSSCHHQDRGGALQDRESPRSYSSTLTDMGRSAPRERRGTPEKEKL. Residues 812-824 are compositionally biased toward polar residues; it reads ASFQDVDTANSSC. Basic and acidic residues predominate over residues 825–839; sequence HHQDRGGALQDRESP. Serine 843 carries the phosphoserine modification. Basic and acidic residues predominate over residues 853-866; it reads APRERRGTPEKEKL. SH3 domains lie at 863–922 and 938–999; these read KEKL…KLTP and GEIG…VVKK. A phosphoserine mark is found at serine 1017 and serine 1023. The 60-residue stretch at 1041 to 1100 folds into the SH3 3 domain; sequence GGGEPFQALYNYTPRNEDELELRESDVIDVMEKCDDGWFVGTSRRTKFFGTFPGNYVKRL.

Interacts with ABL, CBL, DNM1, DNM2, FLOT1, AFDN, PTK2B/PYK2, SAPAP, SPTAN1, SYNJ1, SYNJ2, VCL/vinculin and WASF. Interacts with ABL1/c-Abl, ABL2/v-Abl/Arg, ACTN, CBL and PALLD. Interacts with PTPN12 and WASF1 via its SH3 domains; this interaction may mediate the partial PTPN12 and WASF1 translocation to focal adhesion sites. Post-translationally, ubiquitinated by CBL. In terms of processing, dephosphorylated by PTPN12. In terms of tissue distribution, abundantly expressed in heart. In cardiac muscle cells, located in the Z-disks of sarcomere. Also found, but to a lower extent, in small and large intestine, pancreas, thymus, colon, spleen, prostate, testis, brain, ovary and epithelial cells. In the pancreas, mainly expressed in acinar cells, duct cells and all cell types in islets (at protein level). Tends to be down-regulated in pancreatic adenocarcinomas ans metastases.

It is found in the cytoplasm. Its subcellular location is the perinuclear region. The protein localises to the apical cell membrane. It localises to the cell junction. The protein resides in the focal adhesion. It is found in the cell projection. Its subcellular location is the lamellipodium. Adapter protein that plays a role in the assembling of signaling complexes, being a link between ABL kinases and actin cytoskeleton. Can form complex with ABL1 and CBL, thus promoting ubiquitination and degradation of ABL1. May play a role in the regulation of pancreatic cell adhesion, possibly by acting on WASF1 phosphorylation, enhancing phosphorylation by ABL1, as well as dephosphorylation by PTPN12. Isoform 6 increases water and sodium absorption in the intestine and gall-bladder. The protein is Sorbin and SH3 domain-containing protein 2 (SORBS2) of Homo sapiens (Human).